Here is a 266-residue protein sequence, read N- to C-terminus: Ribosome-recycling factor, chloroplastic (266 aa).

Residues 1 to 26 (MPPLHAVSPAAAAAPPRALSSAARVP) are compositionally biased toward low complexity. Residues 1–30 (MPPLHAVSPAAAAAPPRALSSAARVPQRPG) form a disordered region. A chloroplast-targeting transit peptide spans 1–74 (MPPLHAVSPA…SDKRAVLRHA (74 aa)). 2 coiled-coil regions span residues 75–109 (TIEEIEAEKSVIEDQARERMEKAIETVQNNFNTVR) and 207–266 (VAIR…LMKI).

Belongs to the RRF family.

It is found in the plastid. The protein resides in the chloroplast. Functionally, responsible for the release of ribosomes from messenger RNA at the termination of chloroplastic protein biosynthesis. The chain is Ribosome-recycling factor, chloroplastic from Oryza sativa subsp. indica (Rice).